A 93-amino-acid polypeptide reads, in one-letter code: Stromal cell-derived factor 1 (93 aa).

The first 21 residues, 1–21 (MDAKVVAVLALVLAALCISDG), serve as a signal peptide directing secretion. A Receptor activation motif motif is present at residues 22–23 (KP). Residues 29–33 (RCPCR) form a receptor and heparin binding region. Disulfide bonds link C30–C55 and C32–C71. Receptor binding stretches follow at residues 39–41 (IAR), 48–50 (KIL), and 60–70 (VARLKNNNRQV). Residues 41 to 51 (RANVKHLKILN), R62, Q69, and K85 each bind heparin.

The protein belongs to the intercrine alpha (chemokine CxC) family. As to quaternary structure, monomer or homodimer; in equilibrium. Dimer formation is induced by non acidic pH and the presence of multivalent anions, and by binding to CXCR4 or heparin. Monomeric form is required for full chemotactic activity and resistance to ischemia/reperfusion injury, whereas the dimeric form acts as a partial agonist of CXCR4, stimulating Ca2+ mobilization but with no chemotactic activity and instead acts as a selective antagonist that blocks chemotaxis induced by the monomeric form. Interacts with the N-terminus of ACKR3. Interacts with integrin subunit ITGB3 (via the allosteric site (site 2)). Interacts with TNFAIP6 (via Link domain). Highest expression levels detected in kidney, liver, spleen and muscle. Isoform Alpha is expressed ubiquitously but at varying levels, while isoform Beta displays tissue-specific expression, with expression detected in kidney, liver, heart, spleen and muscle but not in lung, colon, brain, skin and stomach.

Its subcellular location is the secreted. Chemoattractant active on T-lymphocytes and monocytes but not neutrophils. Activates the C-X-C chemokine receptor CXCR4 to induce a rapid and transient rise in the level of intracellular calcium ions and chemotaxis. Also binds to atypical chemokine receptor ACKR3, which activates the beta-arrestin pathway and acts as a scavenger receptor for SDF-1. Binds to the allosteric site (site 2) of integrins and activates integrins ITGAV:ITGB3, ITGA4:ITGB1 and ITGA5:ITGB1 in a CXCR4-independent manner. Acts as a positive regulator of monocyte migration and a negative regulator of monocyte adhesion via the LYN kinase. Stimulates migration of monocytes and T-lymphocytes through its receptors, CXCR4 and ACKR3, and decreases monocyte adherence to surfaces coated with ICAM-1, a ligand for beta-2 integrins. SDF1A/CXCR4 signaling axis inhibits beta-2 integrin LFA-1 mediated adhesion of monocytes to ICAM-1 through LYN kinase. Plays a protective role after myocardial infarction. Induces down-regulation and internalization of ACKR3 expressed in various cells. Has several critical functions during embryonic development; required for B-cell lymphopoiesis, myelopoiesis in bone marrow and heart ventricular septum formation. Stimulates the proliferation of bone marrow-derived B-cell progenitors in the presence of IL7 as well as growth of stromal cell-dependent pre-B-cells. This is Stromal cell-derived factor 1 (Cxcl12) from Mus musculus (Mouse).